The following is a 355-amino-acid chain: Guanine nucleotide-binding protein G(q) subunit alpha (355 aa).

Cys3 carries S-palmitoyl cysteine lipidation. The G-alpha domain maps to 32–355 (KEIKLLLLGT…QHITEVVPGL (324 aa)). The tract at residues 35–48 (KLLLLGTGESGKST) is G1 motif. GTP contacts are provided by residues 40–47 (GTGESGKS), 174–180 (LRVRVPT), 199–203 (DVGGQ), 269–272 (NKKD), and Ala326. Positions 47 and 180 each coordinate Mg(2+). The segment at 172 to 180 (DVLRVRVPT) is G2 motif. Positions 195 to 204 (FKMVDVGGQR) are G3 motif. The segment at 265-272 (ILFLNKKD) is G4 motif. The segment at 324–329 (TCATDT) is G5 motif.

This sequence belongs to the G-alpha family. G(q) subfamily. G proteins are composed of 3 units; alpha, beta and gamma. The alpha chain contains the guanine nucleotide binding site.

Its function is as follows. Guanine nucleotide-binding proteins (G proteins) are involved as modulators or transducers in various transmembrane signaling systems. The protein is Guanine nucleotide-binding protein G(q) subunit alpha of Geodia cydonium (Sponge).